Here is a 549-residue protein sequence, read N- to C-terminus: Glucose-6-phosphate isomerase (549 aa).

E353 functions as the Proton donor in the catalytic mechanism. Catalysis depends on residues H384 and K513.

This sequence belongs to the GPI family.

It localises to the cytoplasm. The catalysed reaction is alpha-D-glucose 6-phosphate = beta-D-fructose 6-phosphate. It functions in the pathway carbohydrate biosynthesis; gluconeogenesis. It participates in carbohydrate degradation; glycolysis; D-glyceraldehyde 3-phosphate and glycerone phosphate from D-glucose: step 2/4. Its function is as follows. Catalyzes the reversible isomerization of glucose-6-phosphate to fructose-6-phosphate. This Bartonella bacilliformis (strain ATCC 35685 / KC583 / Herrer 020/F12,63) protein is Glucose-6-phosphate isomerase.